The chain runs to 628 residues: Kelch-like protein 14 (628 aa).

In terms of domain architecture, BTB spans 33–151; the sequence is CDVTLTAQGQ…LYTANVTLSL (119 aa). Residues 69–115 form a disordered region; the sequence is GGGVGGQDGLGAPKDQQQPPQQQPSQQQQPPPQEEPGTPSSSPDDKL. Positions 84–96 are enriched in low complexity; sequence QQQPPQQQPSQQQ. In terms of domain architecture, BACK spans 210-279; that stretch reads VEDVLLLNFE…PAPELVERVQ (70 aa). Kelch repeat units follow at residues 323-372, 373-424, 425-471, 473-518, 520-570, and 572-620; these read MLLL…EVEN, FLFV…RLDK, HLYV…VHNG, IYIS…VMND, LYAI…VLDD, and IYLV…TVIL.

As to quaternary structure, interacts with TOR1A, preferentially with the ATP-free form.

The protein resides in the cytoplasm. The protein localises to the cytosol. Its subcellular location is the endoplasmic reticulum membrane. The sequence is that of Kelch-like protein 14 (KLHL14) from Homo sapiens (Human).